Here is a 314-residue protein sequence, read N- to C-terminus: Protein OPG185 (314 aa).

The signal sequence occupies residues 1-16 (MTRLPILLLLISLVYA). Residues 17-121 (TPFPQTSKKI…NDTDKVDYEE (105 aa)) form the Ig-like V-type domain. The Virion surface segment spans residues 17–278 (TPFPQTSKKI…SNYKTKDFVE (262 aa)). Cysteines 34 and 103 form a disulfide. Residues N37, N69, N112, and N161 are each glycosylated (N-linked (GlcNAc...) asparagine; by host). The segment covering 193-202 (NTVSASSGES) has biased composition (polar residues). The interval 193–214 (NTVSASSGESTTDETPEPITDK) is disordered. N253 is a glycosylation site (N-linked (GlcNAc...) asparagine; by host). The chain crosses the membrane as a helical span at residues 279-302 (IFGITALIILSAVAIFCITYYIYN). Over 303–314 (KRSRKYKTENKV) the chain is Intravirion.

The protein belongs to the orthopoxvirus OPG185 family. Heterodimerizes with OPG040. The heterodimer OPG185-OPG040 interacts with components of the entry fusion complex OPG143 and OPG094. Heterodimer with C3/VPC protein; disulfide-linked. Glycosylated; contains phosphate and sulfate-substituted glycans. O-glycosylation is required for hemagglutination and hemadsorption activities of infected cell membranes.

It localises to the virion membrane. It is found in the host membrane. In terms of biological role, prevents cell to cell fusion by interacting with and directing the viral OPG040 protein on the host plasma membrane. The OPG185-OPG040 complex associates with components of the entry fusion complex (EFC) presumably to avoid superinfection and syncytium formation. Via its interaction with C3/VCP protein, protects the infected cell and probably also the extracellular enveloped virus from complement attack. The chain is Protein OPG185 (OPG185) from Bos taurus (Bovine).